Consider the following 21-residue polypeptide: Antimicrobial peptide scolopin-1 (21 aa).

Expressed by the venom gland.

The protein localises to the secreted. Antimicrobial peptide against both Gram-positive, -negative and yeast. Also induces histamine release by mast cells and shows moderate hemolytic activities against both human and rabbit red cells. The chain is Antimicrobial peptide scolopin-1 from Scolopendra mutilans (Chinese red-headed centipede).